Consider the following 596-residue polypeptide: Pentatricopeptide repeat-containing protein At5g38730 (596 aa).

PPR repeat units follow at residues 132 to 166 (VSHVFSWLMIYYAKAGMINDSIVVFEQIRSCGLKP), 167 to 201 (HLQACTVLLNSLVKQRLTDTVWKIFKKMVKLGVVA), 202 to 236 (NIHVYNVLVHACSKSGDPEKAEKLLSEMEEKGVFP), 237 to 271 (DIFTYNTLISVYCKKSMHFEALSVQDRMERSGVAP), 272 to 302 (NIVTYNSFIHGFSREGRMREATRLFREIKDD), 306 to 340 (NHVTYTTLIDGYCRMNDIDEALRLREVMESRGFSP), 341 to 375 (GVVTYNSILRKLCEDGRIREANRLLTEMSGKKIEP), 376 to 410 (DNITCNTLINAYCKIEDMVSAVKVKKKMIESGLKL), 411 to 445 (DMYSYKALIHGFCKVLELENAKEELFSMIEKGFSP), 446 to 480 (GYATYSWLVDGFYNQNKQDEITKLLEEFEKRGLCA), 481 to 515 (DVALYRGLIRRICKLEQVDYAKVLFESMEKKGLVG), and 516 to 550 (DSVIFTTMAYAYWRTGKVTEASALFDVMYNRRLMV).

It belongs to the PPR family. P subfamily.

The polypeptide is Pentatricopeptide repeat-containing protein At5g38730 (Arabidopsis thaliana (Mouse-ear cress)).